Consider the following 70-residue polypeptide: Sporulation protein YhaL (70 aa).

A helical transmembrane segment spans residues 3–23; sequence FFPWWVYLCIVGIIFSAYKLV. The tract at residues 48-70 is disordered; that stretch reads MEKERERRSSQQHEEENQNHSIA.

It localises to the cell membrane. Its function is as follows. Required for efficient sporulation. In Bacillus subtilis (strain 168), this protein is Sporulation protein YhaL (yhaL).